Consider the following 94-residue polypeptide: Small ubiquitin-related modifier 3 (94 aa).

Residue K11 forms a Glycyl lysine isopeptide (Lys-Gly) (interchain with G-Cter in SUMO) linkage. Residues 15–92 (DHINLKVAGQ…IDVFQQQTGG (78 aa)) form the Ubiquitin-like domain. G92 is covalently cross-linked (Glycyl lysine isopeptide (Gly-Lys) (interchain with K-? in acceptor proteins)). The propeptide occupies 93 to 94 (SC).

Belongs to the ubiquitin family. SUMO subfamily. As to quaternary structure, interacts with sae2 and ube2i. Covalently attached to a number of proteins. In terms of processing, polymeric chains can be formed through Lys-11 cross-linking. Post-translationally, cleavage of precursor form by a sentrin-specific protease is necessary for function.

Its subcellular location is the cytoplasm. It is found in the nucleus. The protein resides in the PML body. Its function is as follows. Ubiquitin-like protein which can be covalently attached to target lysines either as a monomer or as a lysine-linked polymer. Does not seem to be involved in protein degradation and may function as an antagonist of ubiquitin in the degradation process. Plays a role in a number of cellular processes such as nuclear transport, DNA replication and repair, mitosis and signal transduction. Covalent attachment to its substrates requires prior activation by the E1 complex sae1-sae2 and linkage to the E2 enzyme ube2i. The sequence is that of Small ubiquitin-related modifier 3 (sumo3) from Danio rerio (Zebrafish).